Reading from the N-terminus, the 143-residue chain is uncharacterized protein (143 aa).

The disordered stretch occupies residues 1-143 (MRSSRQKASI…WFSQTVKRKA (143 aa)). Basic and acidic residues-rich tracts occupy residues 34–46 (ISAE…KHLD) and 61–76 (EYQK…RKIV). Acidic residues-rich tracts occupy residues 77 to 93 (DDEE…PEEE) and 103 to 115 (YEEE…PDLA).

This is an uncharacterized protein from Bacillus subtilis (strain 168).